A 261-amino-acid polypeptide reads, in one-letter code: N-acetyltransferase ECO1 (261 aa).

The CCHH-type zinc finger occupies 29–53 (LKCPKCEMKYSPNSIDDVATHKKYH). Positions 102–261 (VMIQENKPAE…SGHILIPCYL (160 aa)) constitute an N-acetyltransferase domain.

Belongs to the acetyltransferase family. ECO subfamily.

The protein resides in the nucleus. In terms of biological role, probable acetyltransferase required for the establishment of sister chromatid cohesion and couple the processes of cohesion and DNA replication to ensure that only sister chromatids become paired together. In contrast to the structural cohesins, the deposition and establishment factors are required only during S phase. Acts by acetylating the cohesin complex component SMC3. This chain is N-acetyltransferase ECO1 (ECO1), found in Candida glabrata (strain ATCC 2001 / BCRC 20586 / JCM 3761 / NBRC 0622 / NRRL Y-65 / CBS 138) (Yeast).